Consider the following 111-residue polypeptide: Probable 4-amino-4-deoxy-L-arabinose-phosphoundecaprenol flippase subunit ArnE (111 aa).

3 consecutive transmembrane segments (helical) span residues 38-58 (LWLG…LLVL), 61-81 (LPVG…TLAA), and 89-109 (VLPR…ILGS). One can recognise an EamA domain in the interval 40-109 (LGLALICMGA…IISGIIILGS (70 aa)).

It belongs to the ArnE family. In terms of assembly, heterodimer of ArnE and ArnF.

Its subcellular location is the cell inner membrane. The protein operates within bacterial outer membrane biogenesis; lipopolysaccharide biosynthesis. Translocates 4-amino-4-deoxy-L-arabinose-phosphoundecaprenol (alpha-L-Ara4N-phosphoundecaprenol) from the cytoplasmic to the periplasmic side of the inner membrane. The protein is Probable 4-amino-4-deoxy-L-arabinose-phosphoundecaprenol flippase subunit ArnE of Salmonella paratyphi A (strain ATCC 9150 / SARB42).